The following is a 153-amino-acid chain: Small ribosomal subunit protein bS6 (153 aa).

Positions 94–153 are disordered; the sequence is EAHEEGPSAMMQKRDRDDRPRRDGDRPDRGDRGDRGDRGPREGGRESFGDRPRRPREDRA.

It belongs to the bacterial ribosomal protein bS6 family.

Functionally, binds together with bS18 to 16S ribosomal RNA. This is Small ribosomal subunit protein bS6 from Allorhizobium ampelinum (strain ATCC BAA-846 / DSM 112012 / S4) (Agrobacterium vitis (strain S4)).